Here is a 514-residue protein sequence, read N- to C-terminus: MVWEVKTNQMPNAVQKLLLVMDKRASGMNDSLELLQCNENLPSSPGYNSCDEHMELDDLPELQAVQSDPTQSGMYQLSSDVSHQEYPRSSWNQNTSDIPETTYRENEVDWLTELANIATSPQSPLMQCSFYNRSSPVHIIATSKSLHSYARPPPVSSSSKSEPAFPHHHWKEETPVRHERANSESESGIFCMSSLSDDDDLGWCNSWPSTVWHCFLKGTRLCFHKGSNKEWQDVEDFARAEGCDNEEDLQMGIHKGYGSDGLKLLSHEESVSFGESVLKLTFDPGTVEDGLLTVECKLDHPFYVKNKGWSSFYPSLTVVQHGIPCCEVHIGDVRLPPGHLDAINFDDSGVFDTFKSYDFTPMDSSAVYVLSSMARQRRASLSCGGPGGQDFARSGFSKNCGSPGSSQLSSSSLYAKAVKNHSSGTVSATSPNKCKRPMNAFMLFAKKYRVEYTQMYPGKDNRAISVILGDRWKKMKNEERRMYTLEAKALAEEQKRLNPDCWKRKRTNSSSQQH.

The tract at residues 150 to 182 (ARPPPVSSSSKSEPAFPHHHWKEETPVRHERAN) is disordered. Positions 170–182 (WKEETPVRHERAN) are enriched in basic and acidic residues. Residues 203-345 (WCNSWPSTVW…PPGHLDAINF (143 aa)) enclose the AXH domain. Positions 434–502 (CKRPMNAFML…EQKRLNPDCW (69 aa)) form a DNA-binding region, HMG box.

As to quaternary structure, binds TCF4. Binds RB1. Binds the second PAH repeat of SIN3A. In terms of processing, ubiquitinated by the CTLH E3 ubiquitin-protein ligase complex, leading to subsequent proteasomal degradation.

The protein resides in the nucleus. Functionally, transcriptional repressor that binds to the promoter region of target genes. Plays a role in the regulation of the cell cycle and of the Wnt pathway. Binds preferentially to the sequence 5'-TTCATTCATTCA-3'. Binding to the histone H1.0 promoter is enhanced by interaction with RB1. Disrupts the interaction between DNA and TCF4. The polypeptide is HMG box-containing protein 1 (HBP1) (Pongo abelii (Sumatran orangutan)).